The chain runs to 1465 residues: Protein clueless (1465 aa).

Residues 1–87 are disordered; sequence MALEIDAKNA…SNGHSENGDA (87 aa). Positions 30-51 are enriched in low complexity; that stretch reads HNNNNNAPAAGEKNLVNGSSAA. Over residues 52–61 the composition is skewed to basic residues; it reads TKKKGKKNRN. Ser-273 bears the Phosphoserine mark. One can recognise a Clu domain in the interval 427–669; the sequence is RAEDAFSSKL…RTFPPDVNFL (243 aa). Residues 742–767 are compositionally biased toward basic and acidic residues; it reads AEKQEEPNEEQPEKTEEQPAEKEESK. Disordered regions lie at residues 742-776 and 962-1021; these read AEKQ…TKSA and VSSD…SNSD. Positions 970–986 are enriched in basic residues; the sequence is KQPRNNSGKHNKHKAAK. Composition is skewed to low complexity over residues 987-1003 and 1010-1020; these read ASKP…ATAA and ATTSGATSSNS. 3 TPR repeats span residues 1114-1147, 1240-1273, and 1275-1308; these read AYNF…LNNV, ALID…NLKY, and GNKA…EKET. The disordered stretch occupies residues 1428-1465; it reads NNNDNASETEQPKDEASAAGTPTQLTNGSEESTATVSS. The segment covering 1447-1465 has biased composition (polar residues); the sequence is GTPTQLTNGSEESTATVSS.

Belongs to the CLU family.

It is found in the cytoplasm. Functionally, mRNA-binding protein involved in proper cytoplasmic distribution of mitochondria. The sequence is that of Protein clueless from Drosophila virilis (Fruit fly).